The sequence spans 256 residues: Putative transposase for insertion sequence element IS112 (256 aa).

This sequence belongs to the transposase 11 family.

Its function is as follows. Involved in the transposition of the insertion sequence IS112 which inactivates the SalI restriction-modification system. This chain is Putative transposase for insertion sequence element IS112, found in Streptomyces albus G.